The chain runs to 103 residues: Large ribosomal subunit protein bL21 (103 aa).

This sequence belongs to the bacterial ribosomal protein bL21 family. As to quaternary structure, part of the 50S ribosomal subunit. Contacts protein L20.

This protein binds to 23S rRNA in the presence of protein L20. This is Large ribosomal subunit protein bL21 from Chloroflexus aurantiacus (strain ATCC 29364 / DSM 637 / Y-400-fl).